We begin with the raw amino-acid sequence, 209 residues long: A-type ATP synthase subunit D (209 aa).

This sequence belongs to the V-ATPase D subunit family. As to quaternary structure, has multiple subunits with at least A(3), B(3), C, D, E, F, H, I and proteolipid K(x).

The protein resides in the cell membrane. Its function is as follows. Component of the A-type ATP synthase that produces ATP from ADP in the presence of a proton gradient across the membrane. This chain is A-type ATP synthase subunit D, found in Archaeoglobus fulgidus (strain ATCC 49558 / DSM 4304 / JCM 9628 / NBRC 100126 / VC-16).